Consider the following 44-residue polypeptide: Photosystem I reaction center subunit IX (44 aa).

A helical transmembrane segment spans residues 9 to 29 (FVRSAPVVAAIWLSLTAGIII).

The protein belongs to the PsaJ family.

The protein resides in the cellular thylakoid membrane. Functionally, may help in the organization of the PsaE and PsaF subunits. The sequence is that of Photosystem I reaction center subunit IX from Prochlorococcus marinus (strain MIT 9301).